The following is a 388-amino-acid chain: T-cell surface glycoprotein CD1e, membrane-associated (388 aa).

Positions 1 to 19 (MLLLFLLFEGLCCPGENTA) are cleaved as a signal peptide. The propeptide at 20 to 31 (APQALQSYHLAA) is removed in sCD1e. N-linked (GlcNAc...) asparagine glycosylation is found at Asn47 and Asn84. The region spanning 191–301 (PRFLAGLMEA…LGGHDLIIHW (111 aa)) is the Ig-like domain. Cys230 and Cys285 are oxidised to a cystine. A helical transmembrane segment spans residues 305-325 (SIFLILICLTVIVTLVILVVV).

In terms of assembly, heterodimer with B2M (beta-2-microglobulin). The association with B2M appears to be facilitated by the presence of the propeptide. Post-translationally, mono-ubiquitinated. In terms of processing, proteolytically cleaved in late endosomes to yield a soluble form. In terms of tissue distribution, expressed on cortical thymocytes, dendritic cells, Langerhans cells, on certain T-cell leukemias, and in various other tissues.

Its subcellular location is the golgi apparatus membrane. It localises to the early endosome. The protein resides in the late endosome. The protein localises to the lysosome lumen. T-cell surface glycoprotein CD1e, soluble binds diacetylated lipids, including phosphatidyl inositides and diacylated sulfoglycolipids, and is required for the presentation of glycolipid antigens on the cell surface. The membrane-associated form is not active. This is T-cell surface glycoprotein CD1e, membrane-associated (CD1E) from Homo sapiens (Human).